The primary structure comprises 969 residues: Glycine dehydrogenase (decarboxylating) (969 aa).

K716 bears the N6-(pyridoxal phosphate)lysine mark.

Belongs to the GcvP family. In terms of assembly, the glycine cleavage system is composed of four proteins: P, T, L and H. It depends on pyridoxal 5'-phosphate as a cofactor.

It carries out the reaction N(6)-[(R)-lipoyl]-L-lysyl-[glycine-cleavage complex H protein] + glycine + H(+) = N(6)-[(R)-S(8)-aminomethyldihydrolipoyl]-L-lysyl-[glycine-cleavage complex H protein] + CO2. In terms of biological role, the glycine cleavage system catalyzes the degradation of glycine. The P protein binds the alpha-amino group of glycine through its pyridoxal phosphate cofactor; CO(2) is released and the remaining methylamine moiety is then transferred to the lipoamide cofactor of the H protein. This Shewanella woodyi (strain ATCC 51908 / MS32) protein is Glycine dehydrogenase (decarboxylating).